A 61-amino-acid polypeptide reads, in one-letter code: Small ribosomal subunit protein uS14 (61 aa).

Zn(2+) contacts are provided by cysteine 24, cysteine 27, cysteine 40, and cysteine 43.

The protein belongs to the universal ribosomal protein uS14 family. Zinc-binding uS14 subfamily. Part of the 30S ribosomal subunit. Contacts proteins S3 and S10. Requires Zn(2+) as cofactor.

In terms of biological role, binds 16S rRNA, required for the assembly of 30S particles and may also be responsible for determining the conformation of the 16S rRNA at the A site. In Anaeromyxobacter dehalogenans (strain 2CP-1 / ATCC BAA-258), this protein is Small ribosomal subunit protein uS14.